The following is a 297-amino-acid chain: 4-hydroxy-tetrahydrodipicolinate synthase (297 aa).

Residue threonine 46 participates in pyruvate binding. Residue tyrosine 134 is the Proton donor/acceptor of the active site. Catalysis depends on lysine 162, which acts as the Schiff-base intermediate with substrate. Isoleucine 204 contacts pyruvate.

This sequence belongs to the DapA family. Homotetramer; dimer of dimers.

It localises to the cytoplasm. It catalyses the reaction L-aspartate 4-semialdehyde + pyruvate = (2S,4S)-4-hydroxy-2,3,4,5-tetrahydrodipicolinate + H2O + H(+). It functions in the pathway amino-acid biosynthesis; L-lysine biosynthesis via DAP pathway; (S)-tetrahydrodipicolinate from L-aspartate: step 3/4. Catalyzes the condensation of (S)-aspartate-beta-semialdehyde [(S)-ASA] and pyruvate to 4-hydroxy-tetrahydrodipicolinate (HTPA). This chain is 4-hydroxy-tetrahydrodipicolinate synthase, found in Stenotrophomonas maltophilia (strain R551-3).